A 565-amino-acid polypeptide reads, in one-letter code: O-fucosyltransferase 7 (565 aa).

Residues 17 to 37 traverse the membrane as a helical; Signal-anchor for type II membrane protein segment; that stretch reads VLIWAICVMTLLCFLTVHIYV. Residues N62, N73, N104, N124, and N190 are each glycosylated (N-linked (GlcNAc...) asparagine). 327-329 contributes to the substrate binding site; the sequence is HLR. N-linked (GlcNAc...) asparagine glycosylation is present at N441. The interval 515 to 565 is disordered; it reads NEIHKTRQGSPRRRKGPASGTKGLERHRSEESFYENPLPDCLCQRDPSKAR. A compositionally biased stretch (basic residues) spans 520 to 530; sequence TRQGSPRRRKG.

It belongs to the glycosyltransferase GT106 family.

Its subcellular location is the membrane. It functions in the pathway glycan metabolism. This Arabidopsis thaliana (Mouse-ear cress) protein is O-fucosyltransferase 7.